We begin with the raw amino-acid sequence, 350 residues long: ATP-dependent (S)-NAD(P)H-hydrate dehydratase (350 aa).

The region spanning 35–342 is the YjeF C-terminal domain; that stretch reads LMQSVKRIIP…PEVGRAYEEL (308 aa). (6S)-NADPHX contacts are provided by residues Gly-139 and 192 to 198; that span reads NVAEFGR. ATP-binding positions include 230–234 and 249–258; these read KGPVD and GGLKRCGGQG. A (6S)-NADPHX-binding site is contributed by Asp-259.

This sequence belongs to the NnrD/CARKD family. Mg(2+) is required as a cofactor.

Its subcellular location is the cytoplasm. The enzyme catalyses (6S)-NADHX + ATP = ADP + phosphate + NADH + H(+). It catalyses the reaction (6S)-NADPHX + ATP = ADP + phosphate + NADPH + H(+). Its function is as follows. Catalyzes the dehydration of the S-form of NAD(P)HX at the expense of ATP, which is converted to ADP. Together with NAD(P)HX epimerase, which catalyzes the epimerization of the S- and R-forms, the enzyme allows the repair of both epimers of NAD(P)HX, a damaged form of NAD(P)H that is a result of enzymatic or heat-dependent hydration. The protein is ATP-dependent (S)-NAD(P)H-hydrate dehydratase of Mycosarcoma maydis (Corn smut fungus).